We begin with the raw amino-acid sequence, 229 residues long: MSKKAVVLLSGGLDSATVLAIARHQGYDVYCLSLDYQQRHRAELQAADRVTKALGAVMHRTVKLDLSVFGGSALTDASIAVPEVPSEGIPVTYVPARNTIMLSLALAWAEVLEARDIFIGVNALDYSGYPDCRGEYVHAFQAMANLATKSAVEGRTIAIHAPLIDMTKADIVTQGTSLGVDYSLTVSCYQADDEGRACGVCDSCRLRRQGFVAAGLADPTRYAPTAGIR.

9-19 lines the ATP pocket; the sequence is LSGGLDSATVL. C188, C198, C201, and C204 together coordinate Zn(2+).

The protein belongs to the QueC family. It depends on Zn(2+) as a cofactor.

The catalysed reaction is 7-carboxy-7-deazaguanine + NH4(+) + ATP = 7-cyano-7-deazaguanine + ADP + phosphate + H2O + H(+). It participates in purine metabolism; 7-cyano-7-deazaguanine biosynthesis. Functionally, catalyzes the ATP-dependent conversion of 7-carboxy-7-deazaguanine (CDG) to 7-cyano-7-deazaguanine (preQ(0)). The protein is 7-cyano-7-deazaguanine synthase of Methylobacillus flagellatus (strain ATCC 51484 / DSM 6875 / VKM B-1610 / KT).